A 335-amino-acid polypeptide reads, in one-letter code: Glutamyl-tRNA reductase (335 aa).

Substrate contacts are provided by residues 60 to 63 (TCHR), Ser110, 115 to 117 (ETE), and Gln121. The active-site Nucleophile is the Cys61. NADP(+) is bound at residue 189–194 (GYSEIN).

The protein belongs to the glutamyl-tRNA reductase family. In terms of assembly, homodimer.

It catalyses the reaction (S)-4-amino-5-oxopentanoate + tRNA(Glu) + NADP(+) = L-glutamyl-tRNA(Glu) + NADPH + H(+). Its pathway is porphyrin-containing compound metabolism; protoporphyrin-IX biosynthesis; 5-aminolevulinate from L-glutamyl-tRNA(Glu): step 1/2. Catalyzes the NADPH-dependent reduction of glutamyl-tRNA(Glu) to glutamate 1-semialdehyde (GSA). The chain is Glutamyl-tRNA reductase from Chlamydia trachomatis serovar D (strain ATCC VR-885 / DSM 19411 / UW-3/Cx).